Here is a 451-residue protein sequence, read N- to C-terminus: MTETLHIVGGGMAGSEAAWQAAQMGVSVVIHEMRPKVGTFAHKTGHLAEMVCSNSFRSDDDEQNAVGLLHWEMRAAGGLIMEMADAHALPAGGALAVDREPFAESVTARLHEHPNIRVEGTEITSLPAEGKWIIATGPLTSGALAEAIAAETGQESLAFFDAIAPILYFDSIDMTKAWMQSRYDKGETEEERTAYLNCPMDRDQYEAFIDALLAAEKTEFKPGETAGYFDGCLPIEVMAERGRETLRHGPMKPVGLTNPHQPDVKAHAVVQLRRDNALGTLYNIVGFQTKMKYGAQKEVLRMIPGLEEARFARLGGIHRNTFINAPTLLDDQMRLHSRPNLRFAGQITGVEGYVESAAMGLLAGRMAAAEILGTPLASPPQETAMGALIHHITGGAEAKTFQPMNVNFGLFPPLDGVRGGRRGRKERYKGYTDRAKAAWQGWLGQTALAAE.

9–14 (GGGMAG) is an FAD binding site.

This sequence belongs to the MnmG family. TrmFO subfamily. The cofactor is FAD.

It localises to the cytoplasm. It catalyses the reaction uridine(54) in tRNA + (6R)-5,10-methylene-5,6,7,8-tetrahydrofolate + NADH + H(+) = 5-methyluridine(54) in tRNA + (6S)-5,6,7,8-tetrahydrofolate + NAD(+). It carries out the reaction uridine(54) in tRNA + (6R)-5,10-methylene-5,6,7,8-tetrahydrofolate + NADPH + H(+) = 5-methyluridine(54) in tRNA + (6S)-5,6,7,8-tetrahydrofolate + NADP(+). In terms of biological role, catalyzes the folate-dependent formation of 5-methyl-uridine at position 54 (M-5-U54) in all tRNAs. This chain is Methylenetetrahydrofolate--tRNA-(uracil-5-)-methyltransferase TrmFO, found in Dinoroseobacter shibae (strain DSM 16493 / NCIMB 14021 / DFL 12).